The following is a 158-amino-acid chain: 6,7-dimethyl-8-ribityllumazine synthase (158 aa).

Residues Phe22, Ala57 to Glu59, and Ala81 to Ile83 each bind 5-amino-6-(D-ribitylamino)uracil. A (2S)-2-hydroxy-3-oxobutyl phosphate-binding site is contributed by Gly86–Thr87. The Proton donor role is filled by His89. A 5-amino-6-(D-ribitylamino)uracil-binding site is contributed by Phe114. Arg128 lines the (2S)-2-hydroxy-3-oxobutyl phosphate pocket.

It belongs to the DMRL synthase family. As to quaternary structure, forms an icosahedral capsid composed of 60 subunits, arranged as a dodecamer of pentamers.

It carries out the reaction (2S)-2-hydroxy-3-oxobutyl phosphate + 5-amino-6-(D-ribitylamino)uracil = 6,7-dimethyl-8-(1-D-ribityl)lumazine + phosphate + 2 H2O + H(+). The protein operates within cofactor biosynthesis; riboflavin biosynthesis; riboflavin from 2-hydroxy-3-oxobutyl phosphate and 5-amino-6-(D-ribitylamino)uracil: step 1/2. Its function is as follows. Catalyzes the formation of 6,7-dimethyl-8-ribityllumazine by condensation of 5-amino-6-(D-ribitylamino)uracil with 3,4-dihydroxy-2-butanone 4-phosphate. This is the penultimate step in the biosynthesis of riboflavin. The chain is 6,7-dimethyl-8-ribityllumazine synthase from Shewanella loihica (strain ATCC BAA-1088 / PV-4).